Consider the following 291-residue polypeptide: tRNA dimethylallyltransferase (291 aa).

ATP is bound at residue 9–16 (GTTASGKS). Residue 11–16 (TASGKS) participates in substrate binding. Residues 34 to 37 (DSLA) form an interaction with substrate tRNA region.

The protein belongs to the IPP transferase family. In terms of assembly, monomer. Mg(2+) serves as cofactor.

The catalysed reaction is adenosine(37) in tRNA + dimethylallyl diphosphate = N(6)-dimethylallyladenosine(37) in tRNA + diphosphate. Functionally, catalyzes the transfer of a dimethylallyl group onto the adenine at position 37 in tRNAs that read codons beginning with uridine, leading to the formation of N6-(dimethylallyl)adenosine (i(6)A). The polypeptide is tRNA dimethylallyltransferase (Campylobacter concisus (strain 13826)).